Consider the following 306-residue polypeptide: Glutathione transport system permease protein GsiC (306 aa).

Topologically, residues 1–8 (MLNYVIKR) are cytoplasmic. The chain crosses the membrane as a helical span at residues 9 to 29 (LLGLIPTLFIVSVLVFLFVHM). The Periplasmic segment spans residues 30–102 (LPGDPARLIA…SRFMPTLWLT (73 aa)). An ABC transmembrane type-1 domain is found at 95-292 (FMPTLWLTIT…LEFILINLVV (198 aa)). Residues 103–123 (ITSMVWAVIFGMAAGIIAAVW) form a helical membrane-spanning segment. The Cytoplasmic segment spans residues 124–134 (RNRWPDRLSMT). Residues 135–155 (IAVSGISFPAFALGMLLIQVF) traverse the membrane as a helical segment. Topologically, residues 156-168 (SVELGWLPTVGAD) are periplasmic. Residues 169–189 (SWQHYILSSLTLGAAVAAVMA) traverse the membrane as a helical segment. Residues 190–228 (RFTRASFVDVLSEDYMRTARAKGVSETWVVLKHGLRNAM) lie on the Cytoplasmic side of the membrane. Residues 229-249 (IPVVTMMGLQFGFLLGGSIVV) form a helical membrane-spanning segment. Topologically, residues 250–277 (EKVFNWPGLGRLLVDSVEMRDYPVIQAE) are periplasmic. A helical transmembrane segment spans residues 278–298 (ILLFSLEFILINLVVDVLYAA). At 299–306 (INPAIRYK) the chain is on the cytoplasmic side.

It belongs to the binding-protein-dependent transport system permease family. The complex is composed of two ATP-binding proteins (GsiA), two transmembrane proteins (GsiC and GsiD) and a solute-binding protein (GsiB).

The protein localises to the cell inner membrane. Its function is as follows. Part of the ABC transporter complex GsiABCD involved in glutathione import. Probably responsible for the translocation of the substrate across the membrane. The protein is Glutathione transport system permease protein GsiC of Shigella boydii serotype 4 (strain Sb227).